The chain runs to 236 residues: Ubiquinone biosynthesis O-methyltransferase (236 aa).

Residues Arg-39, Gly-59, Asp-80, and Met-124 each coordinate S-adenosyl-L-methionine.

This sequence belongs to the methyltransferase superfamily. UbiG/COQ3 family.

It catalyses the reaction a 3-demethylubiquinol + S-adenosyl-L-methionine = a ubiquinol + S-adenosyl-L-homocysteine + H(+). It carries out the reaction a 3-(all-trans-polyprenyl)benzene-1,2-diol + S-adenosyl-L-methionine = a 2-methoxy-6-(all-trans-polyprenyl)phenol + S-adenosyl-L-homocysteine + H(+). It participates in cofactor biosynthesis; ubiquinone biosynthesis. Functionally, O-methyltransferase that catalyzes the 2 O-methylation steps in the ubiquinone biosynthetic pathway. This chain is Ubiquinone biosynthesis O-methyltransferase, found in Shewanella baltica (strain OS223).